The chain runs to 55 residues: Large ribosomal subunit protein bL33 (55 aa).

The protein belongs to the bacterial ribosomal protein bL33 family.

The sequence is that of Large ribosomal subunit protein bL33 from Enterobacter sp. (strain 638).